The primary structure comprises 107 residues: uncharacterized protein (107 aa).

Transmembrane regions (helical) follow at residues 14–34 (YLAE…IVAW) and 68–88 (FFVF…LVPI).

Its subcellular location is the cell membrane. This is an uncharacterized protein from Haemophilus influenzae (strain ATCC 51907 / DSM 11121 / KW20 / Rd).